Consider the following 813-residue polypeptide: Polycomb group protein FERTILIZATION-INDEPENDENT SEED 2 (813 aa).

A disordered region spans residues 1 to 27 (MARKSIRGKEVVMVSDDDDDDDDVDDD). Positions 15 to 26 (SDDDDDDDDVDD) are enriched in acidic residues. The C2H2-type zinc-finger motif lies at 134 to 155 (CPFCLIPCGGHEGLQLHLKSSH). Disordered stretches follow at residues 197–216 (SPLT…DDSN), 232–261 (DLPR…SEKI), and 274–648 (ESSE…RKEL). Over residues 232–246 (DLPRGTENDSTHVND) the composition is skewed to basic and acidic residues. Residues 243-264 (HVNDDNVSSPPRAHSSEKISDI) form an A-1 repeat. The segment at 243–542 (HVNDDNVSSP…HSSKKNKSTR (300 aa)) is 12 X approximate repeat A. One copy of the B-1 repeat lies at 265–281 (LTTTQLAIAESSEPKVP). A 7 X approximate repeat B region spans residues 265–640 (LTTTQLAIAE…KAEPSEPKVT (376 aa)). The A-2 repeat unit spans residues 282–304 (HVNDGNVSSPPRAHSSAEKNEST). Basic and acidic residues-rich tracts occupy residues 296–307 (SSAEKNESTHVN), 319–331 (HSLE…HVNE), and 344–353 (KKNESTHMND). The stretch at 305 to 327 (HVNDDDDVSSPPRAHSLEKNEST) is one A-3 repeat. The A-4 repeat unit spans residues 328 to 349 (HVNEDNISSPPKAHSSKKNEST). An A-5 repeat occupies 350–371 (HMNDEDVSFPPRTRSSKETSDI). The B-2 repeat unit spans residues 372-388 (LTTTQPAIVEPSEPKVR). Residues 388–402 (RRGSRRKQLYAKRYK) are compositionally biased toward basic residues. The stretch at 403–419 (ARETQPAIAESSEPKVL) is one B-3 repeat. 2 stretches are compositionally biased toward basic and acidic residues: residues 414-423 (SEPKVLHVND) and 453-462 (SEPKVPHVND). The A-6 repeat unit spans residues 420–441 (HVNDENVSSPPEAHSLEKASDI). A B-4 repeat occupies 442–458 (LTTTQPAIAESSEPKVP). An A-7 repeat occupies 459-481 (HVNDENVSSTPRAHSSKKNKSTR). A compositionally biased stretch (basic residues) spans 472–481 (HSSKKNKSTR). An A-8 repeat occupies 482–502 (KNVDNVPSPPKTRSSKKTSDI). The span at 501–512 (DILTTTQPTIAE) shows a compositional bias: polar residues. One copy of the B-5 repeat lies at 503-519 (LTTTQPTIAESSEPKVR). A compositionally biased stretch (basic and acidic residues) spans 514 to 523 (SEPKVRHVND). Residues 520 to 542 (HVNDDNVSSTPRAHSSKKNKSTR) form an A-9 repeat. One copy of the A-10 repeat lies at 543 to 563 (KNDDNIPSPPKTRSSKKTSNI). One copy of the B-6 repeat lies at 564–579 (LTRTQPAIAESEPKVP). A compositionally biased stretch (basic and acidic residues) spans 574-586 (SEPKVPHVNDDKV). The A-11 repeat unit spans residues 580-601 (HVNDDKVSSTPRAHSSKKNKST). The segment covering 593–602 (HSSKKNKSTH) has biased composition (basic residues). The stretch at 602 to 623 (HKKDDNASLPPKTRSSKKTSDI) is one A-12 repeat. One copy of the B-7 repeat lies at 624 to 640 (LATTQPAKAEPSEPKVT). Residues 648 to 783 (LHAERCEAKR…CAKTFHKCTT (136 aa)) are VEFS-box.

It belongs to the VEFS (VRN2-EMF2-FIS2-SU(Z)12) family. As to quaternary structure, probably indirectly associated with FIE and/or MEA. In plants, PcG complexes are probably composed of a member of the EZ family (CLF or MEA), FIE, and a member of the VEFS family (FIS2, VRN2 or EMF2). As to expression, weakly expressed. Expressed in late siliques.

It is found in the nucleus. Functionally, polycomb group (PcG) protein. PcG proteins act by forming multiprotein complexes, which are required to maintain the transcriptionally repressive state of homeotic genes throughout development. PcG proteins are not required to initiate repression, but to maintain it during later stages of development. They probably act via the methylation of histones, rendering chromatin heritably changed in its expressibility. Required to prevent the proliferation of the central cell by repressing unknown target genes before fertilization. Regulates the anteroposterior organization of the endosperm. The protein is Polycomb group protein FERTILIZATION-INDEPENDENT SEED 2 of Arabidopsis thaliana (Mouse-ear cress).